A 289-amino-acid polypeptide reads, in one-letter code: Rhodopsin (289 aa).

At 1 to 7 (YLVNPAA) the chain is on the extracellular side. The chain crosses the membrane as a helical span at residues 8–32 (YAALGAYMFLLILIGFPVNFLTLYV). Residues 33–44 (TIEHKKLRTPLN) lie on the Cytoplasmic side of the membrane. A helical transmembrane segment spans residues 45 to 67 (YILLNLAVANLFMVLGGFTTTMY). Residues 68–81 (TSMHGYFVLGRLGC) are Extracellular-facing. Cysteine 81 and cysteine 158 are oxidised to a cystine. The helical transmembrane segment at 82–104 (NLEGFFATMGGEIALWSLVVLAI) threads the bilayer. Positions 105–107 (ERW) match the 'Ionic lock' involved in activated form stabilization motif. Residues 105–123 (ERWIVVCKPISNFRFTEDH) lie on the Cytoplasmic side of the membrane. The chain crosses the membrane as a helical span at residues 124-144 (AIMGLAFTWVMALSCAVPPLV). Residues 145–173 (GWSRYIPEGMQCSCGVDYYTRAEGFNNES) lie on the Extracellular side of the membrane. N-linked (GlcNAc...) asparagine glycosylation is present at asparagine 171. Residues 174 to 195 (FVIYMFIVHFLTPLIIISFCYG) traverse the membrane as a helical segment. Residues 196–223 (RLLCAVKEAAAAQQESETTQRAEREVSR) are Cytoplasmic-facing. Residues 224 to 245 (MVVMMVISFLMCWLPYASVAWY) form a helical membrane-spanning segment. At 246 to 257 (IFCNQGSEFGPI) the chain is on the extracellular side. The chain crosses the membrane as a helical span at residues 258-279 (FMTLPAFFAKSSAIYNPLIYIC). An N6-(retinylidene)lysine modification is found at lysine 267. Over 280–289 (MNKQFRHCMI) the chain is Cytoplasmic.

This sequence belongs to the G-protein coupled receptor 1 family. Opsin subfamily. Post-translationally, phosphorylated on some or all of the serine and threonine residues present in the C-terminal region. Contains one covalently linked retinal chromophore.

The protein resides in the membrane. Its subcellular location is the cell projection. The protein localises to the cilium. It localises to the photoreceptor outer segment. Its function is as follows. Photoreceptor required for image-forming vision at low light intensity. While most salt water fish species use retinal as chromophore, most freshwater fish use 3-dehydroretinal, or a mixture of retinal and 3-dehydroretinal. Light-induced isomerization of 11-cis to all-trans retinal triggers a conformational change that activates signaling via G-proteins. Subsequent receptor phosphorylation mediates displacement of the bound G-protein alpha subunit by arrestin and terminates signaling. The sequence is that of Rhodopsin (rho) from Cottocomephorus inermis (Longfin Baikal sculpin).